We begin with the raw amino-acid sequence, 582 residues long: Trans-activating transcriptional regulatory protein (582 aa).

The tract at residues 101 to 131 (QPVVEQPSPSSAYHAESFEHSAGVNQPSATG) is disordered.

The protein belongs to the nucleopolyhedrovirus IE-1 protein family. Homodimer. Interacts with helicase and LEF-3. Phosphorylated.

It localises to the host nucleus. Regulatory transcriptional protein, which trans-activates gene expression from early baculovirus promoters. Can also trans-activate its own promoter, suggesting an autoregulation during infection of host cells. Also promotes viral DNA genome replication via the N-terminal region. The polypeptide is Trans-activating transcriptional regulatory protein (IE1) (Autographa californica nuclear polyhedrosis virus (AcMNPV)).